A 259-amino-acid polypeptide reads, in one-letter code: Aliphatic sulfonates import ATP-binding protein SsuB 1 (259 aa).

An ABC transporter domain is found at 15–229; the sequence is VECRRITRRF…QASTPGFQAL (215 aa). ATP is bound at residue 47 to 54; that stretch reads GSSGSGKT.

It belongs to the ABC transporter superfamily. Aliphatic sulfonates importer (TC 3.A.1.17.2) family. The complex is composed of two ATP-binding proteins (SsuB), two transmembrane proteins (SsuC) and a solute-binding protein (SsuA).

It is found in the cell inner membrane. It catalyses the reaction ATP + H2O + aliphatic sulfonate-[sulfonate-binding protein]Side 1 = ADP + phosphate + aliphatic sulfonateSide 2 + [sulfonate-binding protein]Side 1.. Its function is as follows. Part of the ABC transporter complex SsuABC involved in aliphatic sulfonates import. Responsible for energy coupling to the transport system. The sequence is that of Aliphatic sulfonates import ATP-binding protein SsuB 1 from Pseudomonas fluorescens (strain ATCC BAA-477 / NRRL B-23932 / Pf-5).